The sequence spans 102 residues: MPSQKIRIRLKAFDHKLLDQSVGEIVDTAKRTGARVAGPIPLPTIINKYCVLRGPHVDKKSREQFEIRTHKRLIDILDPTQQTVDALMKLDLSAGVDVEIKL.

This sequence belongs to the universal ribosomal protein uS10 family. Part of the 30S ribosomal subunit.

Its function is as follows. Involved in the binding of tRNA to the ribosomes. In Geobacter metallireducens (strain ATCC 53774 / DSM 7210 / GS-15), this protein is Small ribosomal subunit protein uS10.